The primary structure comprises 152 residues: Arginine repressor (152 aa).

It belongs to the ArgR family.

The protein resides in the cytoplasm. It functions in the pathway amino-acid biosynthesis; L-arginine biosynthesis [regulation]. Its function is as follows. Regulates arginine biosynthesis genes. This Lactiplantibacillus plantarum (strain ATCC BAA-793 / NCIMB 8826 / WCFS1) (Lactobacillus plantarum) protein is Arginine repressor.